The following is a 103-amino-acid chain: Leukocyte cysteine proteinase inhibitor 1 (103 aa).

M1 bears the Blocked amino end (Met); partial mark. A disordered region spans residues 1–20 (MESEEMLAGGLTEPRPATPE). Positions 51–55 (QVVAG) match the Secondary area of contact motif.

This sequence belongs to the cystatin family.

The protein localises to the cytoplasm. Potent inhibitor of cathepsins L and S, and papain. The protein is Leukocyte cysteine proteinase inhibitor 1 of Sus scrofa (Pig).